A 125-amino-acid chain; its full sequence is Fluoride-specific ion channel FluC (125 aa).

Helical transmembrane passes span 4 to 24, 35 to 55, 68 to 88, and 100 to 120; these read IALV…VGVW, WGTL…VELV, FLVT…LDAV, and AFYI…GLAL. Na(+) contacts are provided by Gly-75 and Thr-78.

Belongs to the fluoride channel Fluc/FEX (TC 1.A.43) family.

Its subcellular location is the cell inner membrane. The enzyme catalyses fluoride(in) = fluoride(out). Na(+) is not transported, but it plays an essential structural role and its presence is essential for fluoride channel function. Functionally, fluoride-specific ion channel. Important for reducing fluoride concentration in the cell, thus reducing its toxicity. This chain is Fluoride-specific ion channel FluC, found in Agrobacterium fabrum (strain C58 / ATCC 33970) (Agrobacterium tumefaciens (strain C58)).